Consider the following 428-residue polypeptide: MLFPPSLPPTASGRSLGRVETPPGLVRFMVGLAEAPKGGRVLEPACADGPFLRAFREAHGTGYRFVGVEIDPHALDLPPWAEGVVADFLLWEPGEAFDLILGNPPYGIVGEASKYPIHVLREVKGLYKKTLSTWKGKYNLYGAFIEKSVRLLREGGTLVFVVPATWLVLDDFSLLRSFLAREGRTEVYYLGEVFPGRKVSAVVLRFRKGGKGLALWDTRRDGETFTPLLWSEKPEWKGEIIRFETGWTREMEASGPPLGSLFHIRFAARSPEFKKHPAVQKEPEPGLVPVLTGRNLKPGWIDYESNHSGLWMPKERAKELRDFYATPHLVVAHTKGTKVVAAWDEKAYPWREEFHLLPKEGVELDPLFLVEWLNSDKIQEYVKTLYRDFVPHLTLRMLERIPALLPRKGNTERRKHGPYTSPESAGSF.

The interval 407–428 (RKGNTERRKHGPYTSPESAGSF) is disordered.

Belongs to the N(4)/N(6)-methyltransferase family.

It carries out the reaction a 2'-deoxyadenosine in DNA + S-adenosyl-L-methionine = an N(6)-methyl-2'-deoxyadenosine in DNA + S-adenosyl-L-homocysteine + H(+). Its function is as follows. A gamma subtype methylase, recognizes the double-stranded sequence 5'-TCGA-3', methylates A-4 on both strands and protects the DNA from cleavage by the TthHB8I endonuclease. In Thermus thermophilus (strain ATCC 27634 / DSM 579 / HB8), this protein is Type II methyltransferase M.TthHB8I.